Reading from the N-terminus, the 391-residue chain is Ferrochelatase (391 aa).

The Fe cation site is built by His196 and Glu281.

This sequence belongs to the ferrochelatase family.

It is found in the cytoplasm. The enzyme catalyses heme b + 2 H(+) = protoporphyrin IX + Fe(2+). It participates in porphyrin-containing compound metabolism; protoheme biosynthesis; protoheme from protoporphyrin-IX: step 1/1. In terms of biological role, catalyzes the ferrous insertion into protoporphyrin IX. This chain is Ferrochelatase, found in Prochlorococcus marinus subsp. pastoris (strain CCMP1986 / NIES-2087 / MED4).